We begin with the raw amino-acid sequence, 459 residues long: ADP-specific phosphofructokinase (459 aa).

Residues 1–457 (MMEFLKDFQK…FASYLSLLKR (457 aa)) enclose the ADPK domain. Residues E268, E298, and D441 each contribute to the Mg(2+) site. The Proton acceptor role is filled by D441.

Belongs to the carbohydrate kinase PfkC family. It depends on Mg(2+) as a cofactor.

The protein localises to the cytoplasm. The enzyme catalyses beta-D-fructose 6-phosphate + ADP = beta-D-fructose 1,6-bisphosphate + AMP + H(+). It functions in the pathway carbohydrate degradation; glycolysis. Functionally, catalyzes the phosphorylation of fructose 6-phosphate to fructose 1,6-bisphosphate using ADP as the phosphate donor. The sequence is that of ADP-specific phosphofructokinase from Thermococcus litoralis.